The sequence spans 617 residues: DNA mismatch repair protein MutL (617 aa).

This sequence belongs to the DNA mismatch repair MutL/HexB family.

In terms of biological role, this protein is involved in the repair of mismatches in DNA. It is required for dam-dependent methyl-directed DNA mismatch repair. May act as a 'molecular matchmaker', a protein that promotes the formation of a stable complex between two or more DNA-binding proteins in an ATP-dependent manner without itself being part of a final effector complex. The polypeptide is DNA mismatch repair protein MutL (Christiangramia forsetii (strain DSM 17595 / CGMCC 1.15422 / KT0803) (Gramella forsetii)).